Here is a 344-residue protein sequence, read N- to C-terminus: Ferrochelatase (344 aa).

H214 and E295 together coordinate Fe cation.

It belongs to the ferrochelatase family.

It localises to the cytoplasm. It carries out the reaction heme b + 2 H(+) = protoporphyrin IX + Fe(2+). It participates in porphyrin-containing compound metabolism; protoheme biosynthesis; protoheme from protoporphyrin-IX: step 1/1. Catalyzes the ferrous insertion into protoporphyrin IX. This is Ferrochelatase from Rhizobium etli (strain CIAT 652).